The primary structure comprises 363 residues: MNGSPTPKRYSSKSSRLYDDYYNIPYQYSNPTPMNRDYNDVGSRINADKLVPEEYKRNTEFINKAVQQNKELNFKLREKQNEIFELKKIAETLRSKLEKYVDITKKLEDQNLNLQIKISDLEKKLSDANSTFKEMRFPKVKDPMVDDDPVSENYDQINVPKHRAPDATGNPRTTNKVSNTSDQDSRLKAIERTLSVLTNYVMRSEDGNNDRMSPLPSPLNTILPINNRLNFQEPKRYNPTVKVNPSDDDIMMYESAELKRVEEEIEELKRKILVRKKHDLRKLSLNNQLQELQSMMDGDDNIKLDNVSKHNHATHRHSSQSSRDYSPSSDACLECSNDLYEKNRVKPENNMSETFATPTPNNR.

The stretch at 60–137 (EFINKAVQQN…ANSTFKEMRF (78 aa)) forms a coiled coil. The tract at residues 160-184 (PKHRAPDATGNPRTTNKVSNTSDQD) is disordered. Over residues 170–182 (NPRTTNKVSNTSD) the composition is skewed to polar residues. Phosphoserine is present on residues Ser213, Ser217, Ser284, and Ser329. Positions 249 to 298 (DIMMYESAELKRVEEEIEELKRKILVRKKHDLRKLSLNNQLQELQSMMDG) form a coiled coil. Positions 310–363 (HNHATHRHSSQSSRDYSPSSDACLECSNDLYEKNRVKPENNMSETFATPTPNNR) are disordered. Low complexity predominate over residues 319–329 (SQSSRDYSPSS). Residues 349-363 (NNMSETFATPTPNNR) are compositionally biased toward polar residues.

It belongs to the SPC42 family. Component of the SPC110 complex containing at least CMD1, SPC29, SPC42 and SCP110.

The protein resides in the nucleus. Its subcellular location is the cytoplasm. It localises to the cytoskeleton. The protein localises to the microtubule organizing center. It is found in the spindle pole body. Functionally, forms a polymeric layer at the periphery of the spindle pole body (SPB) central plaque which has an essential function during SPB duplication and may facilitate attachment of the SPB to the nuclear membrane. The polypeptide is Spindle pole body component SPC42 (SPC42) (Saccharomyces cerevisiae (strain ATCC 204508 / S288c) (Baker's yeast)).